The following is a 125-amino-acid chain: Bublin coiled-coil protein (125 aa).

Positions 46 to 95 (IRKLDTQLDHLNDYMSKMEERLKAHNDRMMETLKQQKEEREKRRRSFHER) form a coiled coil. The disordered stretch occupies residues 79–125 (KQQKEEREKRRRSFHERMSQNQSEDEEFKKQMSSILKRVQSVKRTEK).

Expressed in many epithelial tissues, including the pharynx, intestine, excretory canal and hypodermis.

The protein localises to the cell junction. Its subcellular location is the cytoplasm. It is found in the cytoskeleton. Its function is as follows. Dynamic component of the endotube in intestinal cells, interacts with intermediate filament and regulates intestinal lumen morphology. The chain is Bublin coiled-coil protein from Caenorhabditis elegans.